Here is a 213-residue protein sequence, read N- to C-terminus: Octanoyltransferase (213 aa).

A BPL/LPL catalytic domain is found at 32 to 207 (ESTLDEIWLV…NILALLNNPD (176 aa)). Residues 71–78 (RGGQVTYH), 138–140 (SLG), and 151–153 (GLA) contribute to the substrate site. The active-site Acyl-thioester intermediate is the C169.

It belongs to the LipB family.

The protein localises to the cytoplasm. The enzyme catalyses octanoyl-[ACP] + L-lysyl-[protein] = N(6)-octanoyl-L-lysyl-[protein] + holo-[ACP] + H(+). The protein operates within protein modification; protein lipoylation via endogenous pathway; protein N(6)-(lipoyl)lysine from octanoyl-[acyl-carrier-protein]: step 1/2. In terms of biological role, catalyzes the transfer of endogenously produced octanoic acid from octanoyl-acyl-carrier-protein onto the lipoyl domains of lipoate-dependent enzymes. Lipoyl-ACP can also act as a substrate although octanoyl-ACP is likely to be the physiological substrate. The polypeptide is Octanoyltransferase (Escherichia coli (strain SMS-3-5 / SECEC)).